The sequence spans 513 residues: Sulfhydryl oxidase 1 (513 aa).

The N-terminal stretch at 1 to 30 (MAAAAVARRVVLVLVLAAASLAAAPRGAAA) is a signal peptide. A Thioredoxin domain is found at 31–174 (RSLGGREGPG…LLKWINNQMK (144 aa)). The N-linked (GlcNAc...) asparagine glycan is linked to N51. Catalysis depends on nucleophile residues C76 and C79. Residues C76 and C79 are joined by a disulfide bond. 2 N-linked (GlcNAc...) asparagine glycosylation sites follow: N193 and N266. A disulfide bridge links C301 with C313. Residues 304 to 406 (SKSETRGFSC…GDPLFPKVTW (103 aa)) enclose the ERV/ALR sulfhydryl oxidase domain. FAD contacts are provided by residues R309, W316, H320, E350, H354, 377 to 384 (WSTHNKVN), K403, and W406. Cysteines 348 and 351 form a disulfide. An intrachain disulfide couples C412 to C415.

Requires FAD as cofactor.

It localises to the secreted. It catalyses the reaction 2 R'C(R)SH + O2 = R'C(R)S-S(R)CR' + H2O2. Catalyzes the oxidation of sulfhydryl groups in peptide and protein thiols to disulfides with the reduction of oxygen to hydrogen peroxide. May contribute to disulfide bond formation in a variety of secreted proteins. The chain is Sulfhydryl oxidase 1 (QSOX1) from Oryza sativa subsp. japonica (Rice).